The primary structure comprises 462 residues: Argininosuccinate lyase (462 aa).

This sequence belongs to the lyase 1 family. Argininosuccinate lyase subfamily.

The protein localises to the cytoplasm. The catalysed reaction is 2-(N(omega)-L-arginino)succinate = fumarate + L-arginine. It functions in the pathway amino-acid biosynthesis; L-arginine biosynthesis; L-arginine from L-ornithine and carbamoyl phosphate: step 3/3. This chain is Argininosuccinate lyase, found in Caldicellulosiruptor bescii (strain ATCC BAA-1888 / DSM 6725 / KCTC 15123 / Z-1320) (Anaerocellum thermophilum).